The chain runs to 629 residues: MKHSPLIASACLALVLMSSSLIGSTEARNKKKYVGETGGDFEFIDEINKNTQSNKNLGEHKRWIHDPSSDLCRPLNCKKREICLLEDEFSAVCVSKKELHKNRDEIITKAKYLEEEAKRRVNQQDNQDSQDAEDINNDDEDNSSDGGSSNSSPTGTNNAQASVQGNEETDDEDKSLSLGDDDESKEDDVFYENSIAAGDKQQQQQQLSQPAAGPSVIQQDDDEELDNCKPCPVAKPTFLCGADNRTYSSLCRLDYHNCIHSTSIRIACKGFCPCKEIVDGKRLQRISGYNNKYNKKISLDQQQQQQQQQQQQQQQQQAYKDSNNNNIMMNSGNIMGGNNNDFNTIMNDKEDNNRHNNHINAQYTFTPEEIKYDNKHYKYLKYTAYKKDSKYQEDKHKMRNYNEVVEKQQQKFNKNSNLNAYPSKSAECKPQQLTAIGNRLLDWFSVIMADSKKRRQHSQKSKAHFPPACKTEAKWMFGHLDLNNDGQLSLQEMYDLEHDQNERCIKPFIDTCDLDTDSSINTREWCRCFEKTDRPCAAVRRRIAGDFAGAYAPDCDIQGFYKPTQCHNSVGVCWCVDKHGVEFANTRTRGKPNCESVVNNAASLTSDDEDEGADDEDSAEGSADQMLVF.

A signal peptide spans 1-27 (MKHSPLIASACLALVLMSSSLIGSTEA). Disordered stretches follow at residues 118-186 (KRRV…ESKE) and 198-223 (GDKQQQQQQLSQPAAGPSVIQQDDDE). Over residues 128–143 (DSQDAEDINNDDEDNS) the composition is skewed to acidic residues. A glycan (N-linked (GlcNAc...) asparagine) is linked at N142. The span at 144 to 159 (SDGGSSNSSPTGTNNA) shows a compositional bias: low complexity. Acidic residues predominate over residues 167 to 186 (EETDDEDKSLSLGDDDESKE). In terms of domain architecture, Kazal-like spans 222–273 (DEELDNCKPCPVAKPTFLCGADNRTYSSLCRLDYHNCIHSTSIRIACKGFCP). Cystine bridges form between C228–C258, C231–C251, and C240–C272. N244 is a glycosylation site (N-linked (GlcNAc...) asparagine). The disordered stretch occupies residues 298-356 (SLDQQQQQQQQQQQQQQQQQAYKDSNNNNIMMNSGNIMGGNNNDFNTIMNDKEDNNRHN). Over residues 301-340 (QQQQQQQQQQQQQQQQQAYKDSNNNNIMMNSGNIMGGNNN) the composition is skewed to low complexity. EF-hand domains lie at 468–503 (ACKTEAKWMFGHLDLNNDGQLSLQEMYDLEHDQNER) and 508–535 (FIDTCDLDTDSSINTREWCRCFEKTDRP). Ca(2+)-binding residues include D481, N483, D485, Q487, and E492. The Thyroglobulin type-1 domain maps to 533–594 (DRPCAAVRRR…NTRTRGKPNC (62 aa)). Cystine bridges form between C536–C555, C566–C573, and C575–C594. The interval 602–629 (ASLTSDDEDEGADDEDSAEGSADQMLVF) is disordered. Acidic residues predominate over residues 606 to 619 (SDDEDEGADDEDSA). Low complexity predominate over residues 620 to 629 (EGSADQMLVF).

Interacts (in heparan sulfate-bound form) with wg. Post-translationally, contains heparan sulfate O-linked oligosaccharides. In the wing disk, detected throughout the disk where it is localized primarily to the apical surface but is also present at the basal surface (at protein level).

The protein resides in the secreted. Binds to the Wnt signaling protein wg, stabilizes it and promotes its extracellular distribution. This is required for establishment of a wg gradient during development to allow for regulation of target genes at different levels. The sequence is that of Proteoglycan Cow from Drosophila melanogaster (Fruit fly).